Reading from the N-terminus, the 324-residue chain is Delta-aminolevulinic acid dehydratase (324 aa).

Zn(2+) contacts are provided by C118, C120, and C128. K195 (schiff-base intermediate with substrate) is an active-site residue. 5-aminolevulinate is bound by residues R205 and R217. Residue E233 coordinates Mg(2+). K248 functions as the Schiff-base intermediate with substrate in the catalytic mechanism. The 5-aminolevulinate site is built by S274 and Y313.

This sequence belongs to the ALAD family. Homooctamer. The cofactor is Zn(2+).

The enzyme catalyses 2 5-aminolevulinate = porphobilinogen + 2 H2O + H(+). The protein operates within porphyrin-containing compound metabolism; protoporphyrin-IX biosynthesis; coproporphyrinogen-III from 5-aminolevulinate: step 1/4. Catalyzes an early step in the biosynthesis of tetrapyrroles. Binds two molecules of 5-aminolevulinate per subunit, each at a distinct site, and catalyzes their condensation to form porphobilinogen. This chain is Delta-aminolevulinic acid dehydratase (hemB), found in Staphylococcus aureus (strain NCTC 8325 / PS 47).